The sequence spans 249 residues: Type III pantothenate kinase (249 aa).

ATP is bound at residue 8 to 15 (DAGNSRLK). Substrate is bound by residues tyrosine 95 and 102–105 (GVDR). The Proton acceptor role is filled by aspartate 104. Aspartate 125 is a K(+) binding site. Position 128 (threonine 128) interacts with ATP. Threonine 179 contributes to the substrate binding site.

Belongs to the type III pantothenate kinase family. Homodimer. NH4(+) serves as cofactor. It depends on K(+) as a cofactor.

Its subcellular location is the cytoplasm. It catalyses the reaction (R)-pantothenate + ATP = (R)-4'-phosphopantothenate + ADP + H(+). The protein operates within cofactor biosynthesis; coenzyme A biosynthesis; CoA from (R)-pantothenate: step 1/5. Its function is as follows. Catalyzes the phosphorylation of pantothenate (Pan), the first step in CoA biosynthesis. The sequence is that of Type III pantothenate kinase from Alkalilimnicola ehrlichii (strain ATCC BAA-1101 / DSM 17681 / MLHE-1).